A 267-amino-acid polypeptide reads, in one-letter code: 3-methyl-2-oxobutanoate hydroxymethyltransferase (267 aa).

Mg(2+)-binding residues include Asp41 and Asp80. 3-methyl-2-oxobutanoate-binding positions include 41–42, Asp80, and Lys109; that span reads DS. Glu111 serves as a coordination point for Mg(2+). The Proton acceptor role is filled by Glu178.

Belongs to the PanB family. Homodecamer; pentamer of dimers. It depends on Mg(2+) as a cofactor.

The protein resides in the cytoplasm. The catalysed reaction is 3-methyl-2-oxobutanoate + (6R)-5,10-methylene-5,6,7,8-tetrahydrofolate + H2O = 2-dehydropantoate + (6S)-5,6,7,8-tetrahydrofolate. It participates in cofactor biosynthesis; (R)-pantothenate biosynthesis; (R)-pantoate from 3-methyl-2-oxobutanoate: step 1/2. Catalyzes the reversible reaction in which hydroxymethyl group from 5,10-methylenetetrahydrofolate is transferred onto alpha-ketoisovalerate to form ketopantoate. This chain is 3-methyl-2-oxobutanoate hydroxymethyltransferase, found in Kosmotoga olearia (strain ATCC BAA-1733 / DSM 21960 / TBF 19.5.1).